We begin with the raw amino-acid sequence, 339 residues long: Glycerol-3-phosphate dehydrogenase [NAD(P)+] (339 aa).

4 residues coordinate NADPH: Ser15, Tyr16, His36, and Lys110. Sn-glycerol 3-phosphate contacts are provided by Lys110, Gly139, and Thr141. Residue Ala143 participates in NADPH binding. Lys195, Asp248, Ser258, Arg259, and Asn260 together coordinate sn-glycerol 3-phosphate. Lys195 acts as the Proton acceptor in catalysis. Arg259 lines the NADPH pocket. NADPH contacts are provided by Val283 and Glu285.

Belongs to the NAD-dependent glycerol-3-phosphate dehydrogenase family.

It localises to the cytoplasm. The catalysed reaction is sn-glycerol 3-phosphate + NAD(+) = dihydroxyacetone phosphate + NADH + H(+). It catalyses the reaction sn-glycerol 3-phosphate + NADP(+) = dihydroxyacetone phosphate + NADPH + H(+). Its pathway is membrane lipid metabolism; glycerophospholipid metabolism. In terms of biological role, catalyzes the reduction of the glycolytic intermediate dihydroxyacetone phosphate (DHAP) to sn-glycerol 3-phosphate (G3P), the key precursor for phospholipid synthesis. The polypeptide is Glycerol-3-phosphate dehydrogenase [NAD(P)+] (Klebsiella pneumoniae subsp. pneumoniae (strain ATCC 700721 / MGH 78578)).